Consider the following 445-residue polypeptide: Anaerobilin synthase (445 aa).

The region spanning 52 to 287 (TASPRKRLVY…LQGCDFMDDA (236 aa)) is the Radical SAM core domain. Tyr61 is an S-adenosyl-L-methionine binding site. [4Fe-4S] cluster contacts are provided by Cys67 and Cys71. S-adenosyl-L-methionine is bound at residue Phe73. Cys74 is a [4Fe-4S] cluster binding site. S-adenosyl-L-methionine-binding positions include Gly118, 119–120 (GT), Glu151, Gln178, Arg190, and Asp215.

This sequence belongs to the anaerobic coproporphyrinogen-III oxidase family. ChuW/HutW subfamily. The cofactor is [4Fe-4S] cluster.

The enzyme catalyses 2 reduced [flavodoxin] + heme b + 2 S-adenosyl-L-methionine = anaerobilin + 2 oxidized [flavodoxin] + Fe(2+) + 5'-deoxyadenosine + L-methionine + S-adenosyl-L-homocysteine. Its activity is regulated as follows. Inhibited by exposure to molecular oxygen. In terms of biological role, involved in heme degradation and iron utilization under anaerobic conditions. Catalyzes a radical-mediated mechanism facilitating iron liberation and the production of the tetrapyrrole product anaerobilin. Can use heme, mesoheme and deuteroheme as substrates. This is Anaerobilin synthase from Escherichia coli O157:H7.